Here is a 250-residue protein sequence, read N- to C-terminus: Adapter protein MecA (250 aa).

Belongs to the MecA family. In terms of assembly, homodimer.

Enables the recognition and targeting of unfolded and aggregated proteins to the ClpC protease or to other proteins involved in proteolysis. This is Adapter protein MecA from Streptococcus sanguinis (strain SK36).